A 147-amino-acid chain; its full sequence is Diuretic hormone 45 (147 aa).

The signal sequence occupies residues 1-26 (MMWWAVWCAAMVAGSVFTAAAPPTDS). A propeptide spanning residues 27 to 84 (IDLMQMDPSLADDESLGFAMQSLSGRYAAAPWLYLLADVSHDPQRMAEFSQSSGRARP) is cleaved from the precursor. A Valine amide modification is found at valine 131. The propeptide occupies 135–147 (GAWGEPASYLYNN).

This sequence belongs to the sauvagine/corticotropin-releasing factor/urotensin I family.

Its subcellular location is the secreted. In terms of biological role, regulation of fluid secretion. This Bombyx mori (Silk moth) protein is Diuretic hormone 45 (dh45).